A 176-amino-acid polypeptide reads, in one-letter code: Shikimate kinase (176 aa).

14–19 (GAGKST) serves as a coordination point for ATP. Ser-18 provides a ligand contact to Mg(2+). Positions 36, 60, and 83 each coordinate substrate. An ATP-binding site is contributed by Arg-121. Residue Arg-140 coordinates substrate.

Belongs to the shikimate kinase family. As to quaternary structure, monomer. Mg(2+) is required as a cofactor.

The protein localises to the cytoplasm. The enzyme catalyses shikimate + ATP = 3-phosphoshikimate + ADP + H(+). Its pathway is metabolic intermediate biosynthesis; chorismate biosynthesis; chorismate from D-erythrose 4-phosphate and phosphoenolpyruvate: step 5/7. In terms of biological role, catalyzes the specific phosphorylation of the 3-hydroxyl group of shikimic acid using ATP as a cosubstrate. This Francisella tularensis subsp. holarctica (strain FTNF002-00 / FTA) protein is Shikimate kinase.